A 91-amino-acid polypeptide reads, in one-letter code: Small ribosomal subunit protein bS18 (91 aa).

Belongs to the bacterial ribosomal protein bS18 family. As to quaternary structure, part of the 30S ribosomal subunit. Forms a tight heterodimer with protein bS6.

Its function is as follows. Binds as a heterodimer with protein bS6 to the central domain of the 16S rRNA, where it helps stabilize the platform of the 30S subunit. The sequence is that of Small ribosomal subunit protein bS18 from Burkholderia multivorans (strain ATCC 17616 / 249).